Here is a 250-residue protein sequence, read N- to C-terminus: 3-deoxy-manno-octulosonate cytidylyltransferase (250 aa).

Belongs to the KdsB family.

The protein resides in the cytoplasm. The catalysed reaction is 3-deoxy-alpha-D-manno-oct-2-ulosonate + CTP = CMP-3-deoxy-beta-D-manno-octulosonate + diphosphate. The protein operates within nucleotide-sugar biosynthesis; CMP-3-deoxy-D-manno-octulosonate biosynthesis; CMP-3-deoxy-D-manno-octulosonate from 3-deoxy-D-manno-octulosonate and CTP: step 1/1. It participates in bacterial outer membrane biogenesis; lipopolysaccharide biosynthesis. Its function is as follows. Activates KDO (a required 8-carbon sugar) for incorporation into bacterial lipopolysaccharide in Gram-negative bacteria. This Bacteroides thetaiotaomicron (strain ATCC 29148 / DSM 2079 / JCM 5827 / CCUG 10774 / NCTC 10582 / VPI-5482 / E50) protein is 3-deoxy-manno-octulosonate cytidylyltransferase.